Reading from the N-terminus, the 503-residue chain is Aspartyl/glutamyl-tRNA(Asn/Gln) amidotransferase subunit B (503 aa).

The protein belongs to the GatB/GatE family. GatB subfamily. Heterotrimer of A, B and C subunits.

It catalyses the reaction L-glutamyl-tRNA(Gln) + L-glutamine + ATP + H2O = L-glutaminyl-tRNA(Gln) + L-glutamate + ADP + phosphate + H(+). The enzyme catalyses L-aspartyl-tRNA(Asn) + L-glutamine + ATP + H2O = L-asparaginyl-tRNA(Asn) + L-glutamate + ADP + phosphate + 2 H(+). In terms of biological role, allows the formation of correctly charged Asn-tRNA(Asn) or Gln-tRNA(Gln) through the transamidation of misacylated Asp-tRNA(Asn) or Glu-tRNA(Gln) in organisms which lack either or both of asparaginyl-tRNA or glutaminyl-tRNA synthetases. The reaction takes place in the presence of glutamine and ATP through an activated phospho-Asp-tRNA(Asn) or phospho-Glu-tRNA(Gln). This chain is Aspartyl/glutamyl-tRNA(Asn/Gln) amidotransferase subunit B, found in Roseobacter denitrificans (strain ATCC 33942 / OCh 114) (Erythrobacter sp. (strain OCh 114)).